A 460-amino-acid chain; its full sequence is Elongation factor 1-alpha-A (460 aa).

G2 is modified (n,N,N-trimethylglycine). K3 carries the N6,N6-dimethyllysine; alternate modification. At K3 the chain carries N6-methyllysine; alternate. In terms of domain architecture, tr-type G spans 5–240 (KGHINVVVIG…DSIEPPARPT (236 aa)). The segment at 14 to 21 (GHVDSGKS) is G1. 14 to 21 (GHVDSGKS) contributes to the GTP binding site. K30 carries the N6-methyllysine modification. The tract at residues 70-74 (GITID) is G2. The residue at position 79 (K79) is an N6,N6,N6-trimethyllysine. Residues 91–94 (DAPG) are G3. Residues 91-95 (DAPGH) and 153-156 (NKMD) each bind GTP. The tract at residues 153–156 (NKMD) is G4. The interval 192-194 (SGF) is G5. Residue K316 is modified to N6,N6-dimethyllysine; alternate. Residue K316 is modified to N6-methyllysine; alternate. The residue at position 390 (K390) is an N6-methyllysine.

This sequence belongs to the TRAFAC class translation factor GTPase superfamily. Classic translation factor GTPase family. EF-Tu/EF-1A subfamily.

The protein resides in the cytoplasm. Functionally, this protein promotes the GTP-dependent binding of aminoacyl-tRNA to the A-site of ribosomes during protein biosynthesis. This chain is Elongation factor 1-alpha-A (tef101), found in Schizosaccharomyces pombe (strain 972 / ATCC 24843) (Fission yeast).